Reading from the N-terminus, the 256-residue chain is Thiazole synthase (256 aa).

K95 serves as the catalytic Schiff-base intermediate with DXP. Residues G156, 182 to 183, and 204 to 205 each bind 1-deoxy-D-xylulose 5-phosphate; these read AG and NT.

The protein belongs to the ThiG family. Homotetramer. Forms heterodimers with either ThiH or ThiS.

It is found in the cytoplasm. The catalysed reaction is [ThiS sulfur-carrier protein]-C-terminal-Gly-aminoethanethioate + 2-iminoacetate + 1-deoxy-D-xylulose 5-phosphate = [ThiS sulfur-carrier protein]-C-terminal Gly-Gly + 2-[(2R,5Z)-2-carboxy-4-methylthiazol-5(2H)-ylidene]ethyl phosphate + 2 H2O + H(+). It participates in cofactor biosynthesis; thiamine diphosphate biosynthesis. Catalyzes the rearrangement of 1-deoxy-D-xylulose 5-phosphate (DXP) to produce the thiazole phosphate moiety of thiamine. Sulfur is provided by the thiocarboxylate moiety of the carrier protein ThiS. In vitro, sulfur can be provided by H(2)S. In Alteromonas mediterranea (strain DSM 17117 / CIP 110805 / LMG 28347 / Deep ecotype), this protein is Thiazole synthase.